The primary structure comprises 505 residues: Glycerol kinase (505 aa).

ADP is bound at residue T12. 3 residues coordinate ATP: T12, T13, and S14. Position 12 (T12) interacts with sn-glycerol 3-phosphate. R16 is a binding site for ADP. 4 residues coordinate sn-glycerol 3-phosphate: R82, E83, Y134, and D249. Residues R82, E83, Y134, D249, and Q250 each contribute to the glycerol site. 2 residues coordinate ADP: T271 and G315. Residues T271, G315, Q319, and G416 each contribute to the ATP site. G416 and N420 together coordinate ADP.

The protein belongs to the FGGY kinase family.

It catalyses the reaction glycerol + ATP = sn-glycerol 3-phosphate + ADP + H(+). It participates in polyol metabolism; glycerol degradation via glycerol kinase pathway; sn-glycerol 3-phosphate from glycerol: step 1/1. Inhibited by fructose 1,6-bisphosphate (FBP). Functionally, key enzyme in the regulation of glycerol uptake and metabolism. Catalyzes the phosphorylation of glycerol to yield sn-glycerol 3-phosphate. In Mycolicibacterium gilvum (strain PYR-GCK) (Mycobacterium gilvum (strain PYR-GCK)), this protein is Glycerol kinase.